The primary structure comprises 240 residues: Uridylate cyclase (240 aa).

The region spanning 45-180 (TYLYADMANS…RAPNLAAKLS (136 aa)) is the Guanylate cyclase domain. Position 48 (Tyr48) interacts with a ribonucleoside 5'-triphosphate. Asp50 and Asp94 together coordinate Mn(2+). Arg95 lines the a ribonucleoside 5'-triphosphate pocket.

The protein belongs to the adenylyl cyclase class-4/guanylyl cyclase family. Pyrimidine cyclase subfamily. As to quaternary structure, homodimer. Requires Mn(2+) as cofactor.

The protein resides in the cytoplasm. The catalysed reaction is UTP = 3',5'-cyclic UMP + diphosphate. Functionally, pycsar (pyrimidine cyclase system for antiphage resistance) provides immunity against bacteriophage. The pyrimidine cyclase (PycC) synthesizes cyclic nucleotides in response to infection; these serve as specific second messenger signals. The signals activate the adjacent effector, leading to bacterial cell death and abortive phage infection. A clade B Pycsar system. Its function is as follows. The pyrimidine cyclase gene of a two-gene Pycsar system, weakly generates cyclic UMP (cUMP) from UTP, has little to no activity on ATP, CTP or GTP. Expression of this and adjacent effector RsmPycTM (AC A0A1V0HUU2) probably confers resistance to bacteriophage. The genes are probably only expressed in response to bacteriophage infection. The polypeptide is Uridylate cyclase (Rhodovulum sp. (strain MB263)).